A 776-amino-acid polypeptide reads, in one-letter code: LPS-assembly protein LptD (776 aa).

The N-terminal stretch at 1–24 (MQHFSRTFLAASIATALFAPYAQA) is a signal peptide.

The protein belongs to the LptD family. In terms of assembly, component of the lipopolysaccharide transport and assembly complex. Interacts with LptE and LptA.

Its subcellular location is the cell outer membrane. Together with LptE, is involved in the assembly of lipopolysaccharide (LPS) at the surface of the outer membrane. This Vibrio vulnificus (strain CMCP6) protein is LPS-assembly protein LptD.